Here is a 453-residue protein sequence, read N- to C-terminus: Fibrinogen gamma chain (453 aa).

A signal peptide spans 1-26 (MSWSLHPRNLILYFYALLFLSSTCVA). Phosphoserine; by FAM20C is present on Ser-68. Asn-78 is a glycosylation site (N-linked (GlcNAc...) (complex) asparagine). The Fibrinogen C-terminal domain occupies 170-416 (QIHDITGKDC…KTTMKIIPFN (247 aa)). Residues Cys-179 and Cys-208 are joined by a disulfide bond. Asn-334 carries N-linked (GlcNAc...) asparagine; in variant Asahi glycosylation. Ca(2+) contacts are provided by Asp-344, Asp-346, Phe-348, and Gly-350. A disulfide bond links Cys-352 and Cys-365. The gamma-chain polymerization, binding amino end of another fibrin alpha chain stretch occupies residues 400 to 422 (TRWYSMKKTTMKIIPFNRLTIGE). Residues 423 to 437 (GQQHHLGGAKQVRPE) are platelet aggregation and Staphylococcus clumping. Residue Gln-424 forms an Isoglutamyl lysine isopeptide (Gln-Lys) (interchain with K-432) linkage. The segment at 424 to 453 (QQHHLGGAKQVRPEHPAETEYDSLYPEDDL) is disordered. An Isoglutamyl lysine isopeptide (Lys-Gln) (interchain with Q-424) cross-link involves residue Lys-432. The segment covering 442–453 (TEYDSLYPEDDL) has biased composition (acidic residues). Sulfotyrosine is present on residues Tyr-444 and Tyr-448.

In terms of assembly, heterohexamer; disulfide linked. Contains 2 sets of 3 non-identical chains (alpha, beta and gamma). The 2 heterotrimers are in head to head conformation with the N-termini in a small central domain. Post-translationally, conversion of fibrinogen to fibrin is triggered by thrombin, which cleaves fibrinopeptides A and B from alpha and beta chains, and thus exposes the N-terminal polymerization sites responsible for the formation of the soft clot. The soft clot is converted into the hard clot by factor XIIIA which catalyzes the epsilon-(gamma-glutamyl)lysine cross-linking between gamma chains (stronger) and between alpha chains (weaker) of different monomers. Sulfation of C-terminal tyrosines increases affinity for thrombin. In terms of tissue distribution, detected in blood plasma (at protein level).

Its subcellular location is the secreted. In terms of biological role, together with fibrinogen alpha (FGA) and fibrinogen beta (FGB), polymerizes to form an insoluble fibrin matrix. Has a major function in hemostasis as one of the primary components of blood clots. In addition, functions during the early stages of wound repair to stabilize the lesion and guide cell migration during re-epithelialization. Was originally thought to be essential for platelet aggregation, based on in vitro studies using anticoagulated blood. However, subsequent studies have shown that it is not absolutely required for thrombus formation in vivo. Enhances expression of SELP in activated platelets via an ITGB3-dependent pathway. Maternal fibrinogen is essential for successful pregnancy. Fibrin deposition is also associated with infection, where it protects against IFNG-mediated hemorrhage. May also facilitate the antibacterial immune response via both innate and T-cell mediated pathways. The sequence is that of Fibrinogen gamma chain (FGG) from Homo sapiens (Human).